Here is a 482-residue protein sequence, read N- to C-terminus: UDP-N-acetylmuramate--L-alanine ligase (482 aa).

An ATP-binding site is contributed by 129 to 135 (GTHGKTT).

Belongs to the MurCDEF family.

The protein resides in the cytoplasm. The catalysed reaction is UDP-N-acetyl-alpha-D-muramate + L-alanine + ATP = UDP-N-acetyl-alpha-D-muramoyl-L-alanine + ADP + phosphate + H(+). The protein operates within cell wall biogenesis; peptidoglycan biosynthesis. Cell wall formation. This is UDP-N-acetylmuramate--L-alanine ligase from Acinetobacter baumannii (strain SDF).